The following is a 385-amino-acid chain: Chaperone protein DnaJ 2 (385 aa).

The J domain maps to 10–75 (DYYKELGVSS…AKRKEYDETR (66 aa)). The segment at 155-233 (GVTVPLRMTS…CHGSGIQNRT (79 aa)) adopts a CR-type zinc-finger fold. The Zn(2+) site is built by cysteine 168, cysteine 171, cysteine 185, cysteine 188, cysteine 207, cysteine 210, cysteine 221, and cysteine 224. 4 CXXCXGXG motif repeats span residues 168-175 (CTTCHGSG), 185-192 (CPICNGTG), 207-214 (CDGCRGTG), and 221-228 (CVDCHGSG).

This sequence belongs to the DnaJ family. Homodimer. Zn(2+) is required as a cofactor.

Its subcellular location is the cytoplasm. Functionally, participates actively in the response to hyperosmotic and heat shock by preventing the aggregation of stress-denatured proteins and by disaggregating proteins, also in an autonomous, DnaK-independent fashion. Unfolded proteins bind initially to DnaJ; upon interaction with the DnaJ-bound protein, DnaK hydrolyzes its bound ATP, resulting in the formation of a stable complex. GrpE releases ADP from DnaK; ATP binding to DnaK triggers the release of the substrate protein, thus completing the reaction cycle. Several rounds of ATP-dependent interactions between DnaJ, DnaK and GrpE are required for fully efficient folding. Also involved, together with DnaK and GrpE, in the DNA replication of plasmids through activation of initiation proteins. The protein is Chaperone protein DnaJ 2 of Nocardia farcinica (strain IFM 10152).